The primary structure comprises 497 residues: Cytochrome P450 26A1 (497 aa).

Cys442 provides a ligand contact to heme.

This sequence belongs to the cytochrome P450 family. Heme serves as cofactor.

It localises to the endoplasmic reticulum membrane. It is found in the microsome membrane. It catalyses the reaction all-trans-retinoate + reduced [NADPH--hemoprotein reductase] + O2 = all-trans-(4S)-hydroxyretinoate + oxidized [NADPH--hemoprotein reductase] + H2O + H(+). The enzyme catalyses all-trans-(4S)-hydroxyretinoate + reduced [NADPH--hemoprotein reductase] + O2 = all-trans-(4S,16)-dihydroxyretinoate + oxidized [NADPH--hemoprotein reductase] + H2O + H(+). The catalysed reaction is all-trans-retinoate + reduced [NADPH--hemoprotein reductase] + O2 = all-trans-18-hydroxyretinoate + oxidized [NADPH--hemoprotein reductase] + H2O + H(+). In terms of biological role, a cytochrome P450 monooxygenase involved in the metabolism of retinoates (RAs), the active metabolites of vitamin A, and critical signaling molecules in animals. RAs exist as at least four different isomers: all-trans-RA (atRA), 9-cis-RA, 13-cis-RA, and 9,13-dicis-RA, where atRA is considered to be the biologically active isomer, although 9-cis-RA and 13-cis-RA also have activity. Catalyzes the hydroxylation of atRA primarily at C-4 and C-18, thereby contributing to the regulation of atRA homeostasis and signaling. Hydroxylation of atRA limits its biological activity and initiates a degradative process leading to its eventual elimination. Involved in the convertion of atRA to all-trans-4-oxo-RA. Able to metabolize other RAs such as 9-cis, 13-cis and 9,13-di-cis RA. Can oxidize all-trans-13,14-dihydroretinoate (DRA) to metabolites which could include all-trans-4-oxo-DRA, all-trans-4-hydroxy-DRA, all-trans-5,8-epoxy-DRA, and all-trans-18-hydroxy-DRA. May play a role in the oxidative metabolism of xenobiotics such as tazarotenic acid. The chain is Cytochrome P450 26A1 from Mus musculus (Mouse).